The chain runs to 510 residues: Bifunctional pantoate ligase/cytidylate kinase (510 aa).

Positions 1-276 (MKKVIIRKTE…CGETRLIDHV (276 aa)) are pantoate--beta-alanine ligase. ATP is bound at residue 29-36 (MGNLHDGH). Histidine 36 (proton donor) is an active-site residue. (R)-pantoate is bound at residue glutamine 61. Glutamine 61 serves as a coordination point for beta-alanine. 150–153 (GEKD) contributes to the ATP binding site. Glutamine 156 is a (R)-pantoate binding site. Position 187 to 190 (187 to 190 (LSSR)) interacts with ATP. A cytidylate kinase region spans residues 277–510 (FLMKRRPIIA…DRIPKETEIK (234 aa)).

It in the N-terminal section; belongs to the pantothenate synthetase family. In the C-terminal section; belongs to the cytidylate kinase family. Type 1 subfamily.

The protein resides in the cytoplasm. It carries out the reaction (R)-pantoate + beta-alanine + ATP = (R)-pantothenate + AMP + diphosphate + H(+). The enzyme catalyses CMP + ATP = CDP + ADP. It catalyses the reaction dCMP + ATP = dCDP + ADP. The protein operates within cofactor biosynthesis; (R)-pantothenate biosynthesis; (R)-pantothenate from (R)-pantoate and beta-alanine: step 1/1. Catalyzes the condensation of pantoate with beta-alanine in an ATP-dependent reaction via a pantoyl-adenylate intermediate. Its function is as follows. Catalyzes the transfer of a phosphate group from ATP to either CMP or dCMP to form CDP or dCDP and ADP, respectively. This Prochlorococcus marinus (strain MIT 9301) protein is Bifunctional pantoate ligase/cytidylate kinase.